A 458-amino-acid polypeptide reads, in one-letter code: ATP synthase subunit beta (458 aa).

Residue 148 to 155 (GGAGVGKT) coordinates ATP.

It belongs to the ATPase alpha/beta chains family. In terms of assembly, F-type ATPases have 2 components, CF(1) - the catalytic core - and CF(0) - the membrane proton channel. CF(1) has five subunits: alpha(3), beta(3), gamma(1), delta(1), epsilon(1). CF(0) has three main subunits: a(1), b(2) and c(9-12). The alpha and beta chains form an alternating ring which encloses part of the gamma chain. CF(1) is attached to CF(0) by a central stalk formed by the gamma and epsilon chains, while a peripheral stalk is formed by the delta and b chains.

The protein resides in the cell inner membrane. It catalyses the reaction ATP + H2O + 4 H(+)(in) = ADP + phosphate + 5 H(+)(out). Produces ATP from ADP in the presence of a proton gradient across the membrane. The catalytic sites are hosted primarily by the beta subunits. The polypeptide is ATP synthase subunit beta (Mannheimia succiniciproducens (strain KCTC 0769BP / MBEL55E)).